The sequence spans 96 residues: MHVTLVEINVHDDKVEQFIDVFRQNHLGSIKEPGNLRFDVLQDPQVLTRFYIYEAYVDEQAVAFHKTTPHYKTCVEQLEPLMTGPRTKKVFMGLMP.

The ABM domain maps to 2–91 (HVTLVEINVH…MTGPRTKKVF (90 aa)).

The protein belongs to the LsrG family. As to quaternary structure, homodimer.

Its subcellular location is the cytoplasm. It carries out the reaction (2S)-2-hydroxy-3,4-dioxopentyl phosphate = 3-hydroxy-2,4-dioxopentyl phosphate. Functionally, involved in the degradation of phospho-AI-2, thereby terminating induction of the lsr operon and closing the AI-2 signaling cycle. Catalyzes the conversion of (4S)-4-hydroxy-5-phosphonooxypentane-2,3-dione (P-DPD) to 3-hydroxy-5-phosphonooxypentane-2,4-dione (P-HPD). This is (4S)-4-hydroxy-5-phosphonooxypentane-2,3-dione isomerase from Salmonella typhimurium (strain LT2 / SGSC1412 / ATCC 700720).